The primary structure comprises 90 residues: Defensin-like protein 193 (90 aa).

Residues 1 to 27 form the signal peptide; that stretch reads MAMKSVSTLAVFAILFLVIVEMPEIKA. Cystine bridges form between C32-C86, C45-C69, C54-C81, and C58-C83.

It belongs to the DEFL family. Protease inhibitor I18 (RTI/MTI-2) subfamily.

It is found in the secreted. This chain is Defensin-like protein 193 (ATTI2), found in Arabidopsis thaliana (Mouse-ear cress).